We begin with the raw amino-acid sequence, 31 residues long: uncharacterized protein (31 aa).

The segment at 1 to 31 (MKKLERMSEVSQMCSEAKKNRKRMSVVSSVA) is disordered.

This is an uncharacterized protein from Sulfolobus islandicus filamentous virus (isolate Iceland/Hveragerdi) (SIFV).